The sequence spans 250 residues: uncharacterized protein (250 aa).

Residues 1–25 (MKTLRTLCVLMILSGVIFFGLKIDA) form the signal peptide.

This is an uncharacterized protein from Bacillus subtilis (strain 168).